A 471-amino-acid chain; its full sequence is Cysteine--tRNA ligase (471 aa).

Residue Cys-29 participates in Zn(2+) binding. Positions 31–41 (PTVYNYIHIGN) match the 'HIGH' region motif. The Zn(2+) site is built by Cys-209, His-234, and Glu-238. Residues 266–270 (KMSKS) carry the 'KMSKS' region motif. Lys-269 is a binding site for ATP.

It belongs to the class-I aminoacyl-tRNA synthetase family. In terms of assembly, monomer. Zn(2+) serves as cofactor.

It is found in the cytoplasm. It catalyses the reaction tRNA(Cys) + L-cysteine + ATP = L-cysteinyl-tRNA(Cys) + AMP + diphosphate. The protein is Cysteine--tRNA ligase of Listeria monocytogenes serotype 4b (strain CLIP80459).